A 951-amino-acid polypeptide reads, in one-letter code: UvrABC system protein A (951 aa).

Position 33 to 40 (33 to 40 (GLSGSGKS)) interacts with ATP. The C4-type zinc-finger motif lies at 252–279 (CPICGFTVGELEPRLFSFNAPQGACPDC). ABC transporter domains are found at residues 309-587 (WNPI…RKSL) and 607-935 (GNGK…QYLK). An ATP-binding site is contributed by 639-646 (GVSGSGKS). The C4-type zinc-finger motif lies at 738-764 (CEACHGDGILKIEMNFLPDVFVPCEVC).

The protein belongs to the ABC transporter superfamily. UvrA family. In terms of assembly, forms a heterotetramer with UvrB during the search for lesions.

It localises to the cytoplasm. Functionally, the UvrABC repair system catalyzes the recognition and processing of DNA lesions. UvrA is an ATPase and a DNA-binding protein. A damage recognition complex composed of 2 UvrA and 2 UvrB subunits scans DNA for abnormalities. When the presence of a lesion has been verified by UvrB, the UvrA molecules dissociate. This is UvrABC system protein A from Lactiplantibacillus plantarum (strain ATCC BAA-793 / NCIMB 8826 / WCFS1) (Lactobacillus plantarum).